The following is a 266-amino-acid chain: MSFSKESSRLFGFVAGIKFPKMIQKVINENYVKYFNINMSEFKAPCEYESLNALFTRTLQIPRKFEEGFISPSDGKILECGSTFLANEEHFAFSIKGHAYSVEELLKDSFEKDELKNGLDYVNIYLSPKDYHRYHSPCDMQILSATYTSGVLYSVNEKHLERISNLYVKNERVSLKCQNEKGIFWLVFVGAQNVGKMRFNFDASIQTNAKISHNFTRKYENLNFKKGEELGNFELGSTIVLISQKGLLTFNLKVGQGIKFGEKIAD.

Catalysis depends on charge relay system; for autoendoproteolytic cleavage activity residues Asp-74, His-135, and Ser-237. Ser-237 serves as the catalytic Schiff-base intermediate with substrate; via pyruvic acid; for decarboxylase activity. A Pyruvic acid (Ser); by autocatalysis modification is found at Ser-237.

Belongs to the phosphatidylserine decarboxylase family. PSD-B subfamily. Prokaryotic type I sub-subfamily. In terms of assembly, heterodimer of a large membrane-associated beta subunit and a small pyruvoyl-containing alpha subunit. Pyruvate serves as cofactor. Post-translationally, is synthesized initially as an inactive proenzyme. Formation of the active enzyme involves a self-maturation process in which the active site pyruvoyl group is generated from an internal serine residue via an autocatalytic post-translational modification. Two non-identical subunits are generated from the proenzyme in this reaction, and the pyruvate is formed at the N-terminus of the alpha chain, which is derived from the carboxyl end of the proenzyme. The autoendoproteolytic cleavage occurs by a canonical serine protease mechanism, in which the side chain hydroxyl group of the serine supplies its oxygen atom to form the C-terminus of the beta chain, while the remainder of the serine residue undergoes an oxidative deamination to produce ammonia and the pyruvoyl prosthetic group on the alpha chain. During this reaction, the Ser that is part of the protease active site of the proenzyme becomes the pyruvoyl prosthetic group, which constitutes an essential element of the active site of the mature decarboxylase.

It localises to the cell membrane. The enzyme catalyses a 1,2-diacyl-sn-glycero-3-phospho-L-serine + H(+) = a 1,2-diacyl-sn-glycero-3-phosphoethanolamine + CO2. Its pathway is phospholipid metabolism; phosphatidylethanolamine biosynthesis; phosphatidylethanolamine from CDP-diacylglycerol: step 2/2. Catalyzes the formation of phosphatidylethanolamine (PtdEtn) from phosphatidylserine (PtdSer). The polypeptide is Phosphatidylserine decarboxylase proenzyme (Campylobacter jejuni subsp. jejuni serotype O:2 (strain ATCC 700819 / NCTC 11168)).